The primary structure comprises 323 residues: Aldo-keto reductase family 1 member C3 (323 aa).

NADP(+) contacts are provided by residues Thr23–Tyr24 and Asp50. The active-site Proton donor is the Tyr55. His117 is a substrate binding site. Residues Ser166 to Asn167, Gln190, Tyr216 to Gln222, Lys270 to Tyr272, and Arg276 to Asn280 each bind NADP(+).

Belongs to the aldo/keto reductase family. As to expression, expressed in many tissues including adrenal gland, brain, kidney, liver, lung, mammary gland, placenta, small intestine, colon, spleen, prostate and testis. High expression in prostate and mammary gland. In the prostate, higher levels in epithelial cells than in stromal cells. In the brain, expressed in medulla, spinal cord, frontotemporal lobes, thalamus, subthalamic nuclei and amygdala. Weaker expression in the hippocampus, substantia nigra and caudate.

The protein resides in the cytoplasm. The catalysed reaction is a 3alpha-hydroxysteroid + NADP(+) = a 3-oxosteroid + NADPH + H(+). The enzyme catalyses a 3alpha-hydroxysteroid + NAD(+) = a 3-oxosteroid + NADH + H(+). It catalyses the reaction prostaglandin F2alpha + NADP(+) = prostaglandin D2 + NADPH + H(+). It carries out the reaction prostaglandin F2alpha + NADP(+) = prostaglandin H2 + NADPH + H(+). The catalysed reaction is prostaglandin D2 + NADPH + H(+) = 11beta-prostaglandin F2 + NADP(+). The enzyme catalyses prostaglandin D2-ethanolamide + NADPH + H(+) = 11beta-prostaglandin F2-ethanolamide + NADP(+). It catalyses the reaction testosterone + NAD(+) = androst-4-ene-3,17-dione + NADH + H(+). It carries out the reaction testosterone + NADP(+) = androst-4-ene-3,17-dione + NADPH + H(+). The catalysed reaction is 17beta-estradiol + NADP(+) = estrone + NADPH + H(+). The enzyme catalyses 17beta-estradiol + NAD(+) = estrone + NADH + H(+). It catalyses the reaction (20S)-hydroxypregn-4-en-3-one + NADP(+) = progesterone + NADPH + H(+). It carries out the reaction (20S)-hydroxypregn-4-en-3-one + NAD(+) = progesterone + NADH + H(+). The catalysed reaction is 5alpha-androstane-3alpha,17beta-diol + NADP(+) = 17beta-hydroxy-5alpha-androstan-3-one + NADPH + H(+). The enzyme catalyses 5alpha-androstane-3alpha,17beta-diol + NAD(+) = 17beta-hydroxy-5alpha-androstan-3-one + NADH + H(+). It catalyses the reaction androsterone + NADPH + H(+) = 5alpha-androstane-3alpha,17beta-diol + NADP(+). It carries out the reaction 5alpha-androstane-3alpha,17beta-diol + NAD(+) = androsterone + NADH + H(+). The catalysed reaction is 5alpha-androstane-3beta,17beta-diol + NADP(+) = 17beta-hydroxy-5alpha-androstan-3-one + NADPH + H(+). The enzyme catalyses 9-cis-retinol + NADP(+) = 9-cis-retinal + NADPH + H(+). It functions in the pathway steroid metabolism. Strongly inhibited by nonsteroidal anti-inflammatory drugs (NSAID) including flufenamic acid and indomethacin. Also inhibited by the flavinoid, rutin, and by selective serotonin inhibitors (SSRIs). The oxidation reaction is inhibited by low micromolar concentrations of NADPH. Functionally, cytosolic aldo-keto reductase that catalyzes the NADH and NADPH-dependent reduction of ketosteroids to hydroxysteroids. Acts as a NAD(P)(H)-dependent 3-, 17- and 20-ketosteroid reductase on the steroid nucleus and side chain and regulates the metabolism of androgens, estrogens and progesterone. Displays the ability to catalyze both oxidation and reduction in vitro, but most probably acts as a reductase in vivo since the oxidase activity measured in vitro is inhibited by physiological concentration of NADPH. Acts preferentially as a 17-ketosteroid reductase and has the highest catalytic efficiency of the AKR1C enzyme for the reduction of delta4-androstenedione to form testosterone. Reduces prostaglandin (PG) D2 to 11beta-prostaglandin F2, progesterone to 20alpha-hydroxyprogesterone and estrone to 17beta-estradiol. Catalyzes the transformation of the potent androgen dihydrotestosterone (DHT) into the less active form, 5-alpha-androstan-3-alpha,17-beta-diol (3-alpha-diol). Also displays retinaldehyde reductase activity toward 9-cis-retinal. In Homo sapiens (Human), this protein is Aldo-keto reductase family 1 member C3 (AKR1C3).